The following is a 380-amino-acid chain: Cytochrome b (380 aa).

Transmembrane regions (helical) follow at residues 34 to 54 (FGSLLGICLMTQILTGLLLAM), 78 to 99 (WLIRNLHANGASFFFICIYFHI), 114 to 134 (WNTGVILLLTLMATAFVGYVL), and 179 to 199 (FFALHFLLPFLIAGLTLIHLT). 2 residues coordinate heme b: His84 and His98. Heme b-binding residues include His183 and His197. Residue His202 participates in a ubiquinone binding. A run of 4 helical transmembrane segments spans residues 227–247 (LKDILGFTLMFLPLTTLALFS), 289–309 (LGGVLALAASVLILFLIPFLH), 321–341 (ISQLLFWILVANLLILTWVGS), and 348–368 (FIIIGQLASITYFTILLVLFP).

The protein belongs to the cytochrome b family. In terms of assembly, the cytochrome bc1 complex contains 11 subunits: 3 respiratory subunits (MT-CYB, CYC1 and UQCRFS1), 2 core proteins (UQCRC1 and UQCRC2) and 6 low-molecular weight proteins (UQCRH/QCR6, UQCRB/QCR7, UQCRQ/QCR8, UQCR10/QCR9, UQCR11/QCR10 and a cleavage product of UQCRFS1). This cytochrome bc1 complex then forms a dimer. It depends on heme b as a cofactor.

It is found in the mitochondrion inner membrane. In terms of biological role, component of the ubiquinol-cytochrome c reductase complex (complex III or cytochrome b-c1 complex) that is part of the mitochondrial respiratory chain. The b-c1 complex mediates electron transfer from ubiquinol to cytochrome c. Contributes to the generation of a proton gradient across the mitochondrial membrane that is then used for ATP synthesis. This is Cytochrome b (MT-CYB) from Pachyptila turtur (Fairy prion).